We begin with the raw amino-acid sequence, 391 residues long: uncharacterized protein (391 aa).

The signal sequence occupies residues 1-20; that stretch reads MRKLFLLSILMIGVIVAFAG. The S-archaeol cysteine moiety is linked to residue C21. One can recognise a Fe/B12 periplasmic-binding domain in the interval 104–377; it reads RIVTDFYCPI…DFAKMIHPEL (274 aa).

It localises to the cell membrane. This is an uncharacterized protein from Methanocaldococcus jannaschii (strain ATCC 43067 / DSM 2661 / JAL-1 / JCM 10045 / NBRC 100440) (Methanococcus jannaschii).